The chain runs to 242 residues: Protein HTATIP2 (242 aa).

Ala-2 is modified (N-acetylalanine). Residues 2–25 (AETEALSKLREDFRMQNKSVFILG) are required for interaction with elongation factor EEF1A1. Residues Ser-27, Gly-28, Glu-29, Thr-30, Arg-52, Arg-53, Leu-92, Gly-93, Tyr-143, Lys-147, Leu-170, and Arg-178 each coordinate NADPH. Tyr-143 functions as the Proton acceptor in the catalytic mechanism. Residue Lys-147 is part of the active site.

In terms of assembly, monomer. Forms homodimers during oxidative stress. Interacts (via N-terminus) with elongation factor EEF1A1 (via middle-region); the interaction is direct and competes with EEF1A1 binding to guanyl-nucleotide exchange factor EEF1B2, thereby inhibiting GDP for GTP exchange and reactivation of EEF1A1. Interacts with nuclear transport receptors XPO4, IPO5/RANBP5, IPO7, IPO9 and KPNB1 as well as GCN1L1/GCN1 and LRPPRC probably through their HEAT repeats. Binds NCOA5/CIA.

The protein resides in the cytoplasm. In terms of biological role, represses translation by preventing reactivation of elongation factor eEF1A. May also inhibit nuclear import by competing with nuclear import substrates for binding to a subset of nuclear transport receptors. Has additionally been proposed to act as a redox sensor involved in cellular oxidative stress surveillance. The chain is Protein HTATIP2 (HTATIP2) from Pongo pygmaeus (Bornean orangutan).